The sequence spans 646 residues: Translation initiation factor IF-2 (646 aa).

The region spanning 146–315 (PRPPVVTVMG…LLVAEMEELR (170 aa)) is the tr-type G domain. A G1 region spans residues 155 to 162 (GHVDHGKT). A GTP-binding site is contributed by 155-162 (GHVDHGKT). Residues 180-184 (GITQH) form a G2 region. The segment at 201–204 (DTPG) is G3. Residues 201–205 (DTPGH) and 255–258 (NKID) contribute to the GTP site. A G4 region spans residues 255 to 258 (NKID). Positions 291 to 293 (SAK) are G5.

Belongs to the TRAFAC class translation factor GTPase superfamily. Classic translation factor GTPase family. IF-2 subfamily.

Its subcellular location is the cytoplasm. One of the essential components for the initiation of protein synthesis. Protects formylmethionyl-tRNA from spontaneous hydrolysis and promotes its binding to the 30S ribosomal subunits. Also involved in the hydrolysis of GTP during the formation of the 70S ribosomal complex. The chain is Translation initiation factor IF-2 from Clostridioides difficile (strain 630) (Peptoclostridium difficile).